A 639-amino-acid polypeptide reads, in one-letter code: AP2-like ethylene-responsive transcription factor CRL5 (639 aa).

2 disordered regions span residues 25 to 59 (PHMA…QQQH) and 258 to 277 (GRKR…HHRK). Residues 43–59 (QQQQQQQQQQHHQQQQH) show a composition bias toward low complexity. 2 DNA-binding regions (AP2/ERF) span residues 288–351 (QYRG…INFP) and 387–445 (MYRG…TNFD). Over residues 547 to 561 (QQQQQHMSMSAASSL) the composition is skewed to low complexity. Positions 547-579 (QQQQQHMSMSAASSLVTSLSNSREGSPDRGGGL) are disordered.

This sequence belongs to the AP2/ERF transcription factor family. AP2 subfamily. As to expression, highly expressed at the base of the stem. Expressed in stems. Expressed a low levels in crown roots and seeds. Expressed in the stem region where adventitious (crown) root initiation occurs.

It localises to the nucleus. Functionally, acts as a positive regulator of adventitious (crown) root formation by promoting its initiation. Promotes adventitious root initiation through repression of cytokinin signaling by positively regulating the two-component response regulator RR1. Regulated by the auxin response factor and transcriptional activator ARF23/ARF1. The sequence is that of AP2-like ethylene-responsive transcription factor CRL5 from Oryza sativa subsp. japonica (Rice).